A 1166-amino-acid chain; its full sequence is MGAVFLSGRSGSGKTTFILNEIREKLRDEPLGKPIIFLVPDQMTFLMEYELSKTPDLGGTIRAQVYSFSRLAWRVLQHTGGMNRPFLTGTGIQMLLRRLIEEHKGEFKVYQNASDKSGFTEQVERMLTEFKRHCLPPQSIRDMMEGTGKSEYEDERILSDKLHDLYILYSKLEENLENQYVQSEDYLTLLAEQIPYAEEIRNAAVYVDGFHQFTPQEMSVLEQLMVHAEEITFSLTADKPFTANSPNDLHLFRMTGKAYYDLYQKAKELGLDPSEVRLEETKRHRHHPELQHLERYFDERPAKPYPGQTESLRIMQASNRRTEIEGIAREIHSLIRQGRFRLRDIAVIARNVEDYKDTIKEVFKDCELPFFIDGKESMQNHPLIELIRSTLDIIKGNWRYEAVFRCVKTELLFPEGQPKERLREQIDQLENYCIAYGIKGDRWTSKDPFVYRRYASLDEDFAKTDKEIETENMLNELKGWIVPPIHRLQKRLKKAETVREMAEAVYLYLEEADVPMKLEQERRLAEEGGRIAESRQHEQVWDAVIQLLDEFVEMMGTERISFALFQQMIETGLESLKFALIPPALDQVFIGNMDLSRMYGTKCTFLIGVNDGILPARPADDGVLSDEDREWLKRNGAQLAATGREQLLDENFLIYMTLSSPSEKLYVSYPIADSEGKTLLPSTVVKRLNELFPDSEEKMLIHEPEQLDDEAQLEFLVNKGIALSHLAGQLGIWTRQYAISDVWWSTYNFLMNEPDRIFSQNILSSLFFRNKVENLNRHVSRDLYGEHIQGSVSRMETFKACPFSHFASHGLKLKERQFFKLEAPDIGQLFHSALKLISDRLHELKLDWRDLTKAQCETLSSDAVERLAPKLQKEILLSSNRHHYVKQKLQKIIARVSGILSEHAKASGFAPVGIELGFGGKGPLPPMRFTLKNGCTMELVGRIDRVDKAESSKGLLLRIVDYKSSDKGLDLAEVYYGLALQMLTYLDLSITHSTDWLGMKASPAGVLYFHVHDPMIQASVPLGLDEIEKEIFKKFKMKGLLLGDQEAVKLMDTTLEQGRSNIISAGLKKDGSLRSDSDVVAEEDFHVLRRHIRRTFQQAGEEITDGKVSIEPYKLKDRTPCTYCSYRSFCQFDESLEENEYRILKPEKDSVILERLKKEDEADGDF.

The region spanning 1–285 is the UvrD-like helicase ATP-binding domain; that stretch reads MGAVFLSGRS…VRLEETKRHR (285 aa). 8–15 is a binding site for ATP; sequence GRSGSGKT. Residues 279-586 form the UvrD-like helicase C-terminal domain; that stretch reads EETKRHRHHP…KFALIPPALD (308 aa). Residues C801, C1121, C1124, and C1130 each coordinate [4Fe-4S] cluster.

It belongs to the helicase family. AddB/RexB type 1 subfamily. Heterodimer of AddA and AddB. Mg(2+) is required as a cofactor. The cofactor is [4Fe-4S] cluster.

Functionally, the heterodimer acts as both an ATP-dependent DNA helicase and an ATP-dependent, dual-direction single-stranded exonuclease. Recognizes the chi site generating a DNA molecule suitable for the initiation of homologous recombination. The AddB subunit has 5' -&gt; 3' nuclease activity but not helicase activity. The sequence is that of ATP-dependent helicase/deoxyribonuclease subunit B from Bacillus licheniformis (strain ATCC 14580 / DSM 13 / JCM 2505 / CCUG 7422 / NBRC 12200 / NCIMB 9375 / NCTC 10341 / NRRL NRS-1264 / Gibson 46).